Consider the following 67-residue polypeptide: Large ribosomal subunit protein bL35 (67 aa).

This sequence belongs to the bacterial ribosomal protein bL35 family.

The protein is Large ribosomal subunit protein bL35 of Brachyspira hyodysenteriae (strain ATCC 49526 / WA1).